We begin with the raw amino-acid sequence, 569 residues long: Proline--tRNA ligase (569 aa).

The protein belongs to the class-II aminoacyl-tRNA synthetase family. ProS type 1 subfamily. Homodimer.

The protein resides in the cytoplasm. The catalysed reaction is tRNA(Pro) + L-proline + ATP = L-prolyl-tRNA(Pro) + AMP + diphosphate. Its function is as follows. Catalyzes the attachment of proline to tRNA(Pro) in a two-step reaction: proline is first activated by ATP to form Pro-AMP and then transferred to the acceptor end of tRNA(Pro). As ProRS can inadvertently accommodate and process non-cognate amino acids such as alanine and cysteine, to avoid such errors it has two additional distinct editing activities against alanine. One activity is designated as 'pretransfer' editing and involves the tRNA(Pro)-independent hydrolysis of activated Ala-AMP. The other activity is designated 'posttransfer' editing and involves deacylation of mischarged Ala-tRNA(Pro). The misacylated Cys-tRNA(Pro) is not edited by ProRS. This Desulforamulus reducens (strain ATCC BAA-1160 / DSM 100696 / MI-1) (Desulfotomaculum reducens) protein is Proline--tRNA ligase.